The chain runs to 209 residues: Imidazole glycerol phosphate synthase subunit HisH (209 aa).

The region spanning 1-205 is the Glutamine amidotransferase type-1 domain; sequence MIAIIDYGMG…KGVVETWKSS (205 aa). Residue cysteine 79 is the Nucleophile of the active site. Residues histidine 180 and glutamate 182 contribute to the active site.

In terms of assembly, heterodimer of HisH and HisF.

It is found in the cytoplasm. The enzyme catalyses 5-[(5-phospho-1-deoxy-D-ribulos-1-ylimino)methylamino]-1-(5-phospho-beta-D-ribosyl)imidazole-4-carboxamide + L-glutamine = D-erythro-1-(imidazol-4-yl)glycerol 3-phosphate + 5-amino-1-(5-phospho-beta-D-ribosyl)imidazole-4-carboxamide + L-glutamate + H(+). The catalysed reaction is L-glutamine + H2O = L-glutamate + NH4(+). It participates in amino-acid biosynthesis; L-histidine biosynthesis; L-histidine from 5-phospho-alpha-D-ribose 1-diphosphate: step 5/9. IGPS catalyzes the conversion of PRFAR and glutamine to IGP, AICAR and glutamate. The HisH subunit catalyzes the hydrolysis of glutamine to glutamate and ammonia as part of the synthesis of IGP and AICAR. The resulting ammonia molecule is channeled to the active site of HisF. The polypeptide is Imidazole glycerol phosphate synthase subunit HisH (Bacillus thuringiensis (strain Al Hakam)).